Reading from the N-terminus, the 273-residue chain is Putative pyruvate, phosphate dikinase regulatory protein (273 aa).

Gly149–Thr156 contacts ADP.

The protein belongs to the pyruvate, phosphate/water dikinase regulatory protein family. PDRP subfamily.

It catalyses the reaction N(tele)-phospho-L-histidyl/L-threonyl-[pyruvate, phosphate dikinase] + ADP = N(tele)-phospho-L-histidyl/O-phospho-L-threonyl-[pyruvate, phosphate dikinase] + AMP + H(+). The catalysed reaction is N(tele)-phospho-L-histidyl/O-phospho-L-threonyl-[pyruvate, phosphate dikinase] + phosphate + H(+) = N(tele)-phospho-L-histidyl/L-threonyl-[pyruvate, phosphate dikinase] + diphosphate. In terms of biological role, bifunctional serine/threonine kinase and phosphorylase involved in the regulation of the pyruvate, phosphate dikinase (PPDK) by catalyzing its phosphorylation/dephosphorylation. This Rickettsia typhi (strain ATCC VR-144 / Wilmington) protein is Putative pyruvate, phosphate dikinase regulatory protein.